The sequence spans 617 residues: Putative metal ion transporter C17A12.14 (617 aa).

The interval 1–141 (MPSNTSRSVP…GKNTRDQPSP (141 aa)) is disordered. S105 carries the phosphoserine modification. Basic and acidic residues predominate over residues 117–136 (SHPEDIQRKEFETENGKNTR). S152, S162, S226, and S241 each carry phosphoserine. Helical transmembrane passes span 560–580 (TILG…GMNV) and 590–610 (LGWF…SFIL).

Belongs to the CorA metal ion transporter (MIT) (TC 1.A.35) family. As to quaternary structure, interacts with sad1.

Its subcellular location is the membrane. The sequence is that of Putative metal ion transporter C17A12.14 from Schizosaccharomyces pombe (strain 972 / ATCC 24843) (Fission yeast).